The following is a 151-amino-acid chain: MLP-like protein 329 (151 aa).

The protein belongs to the MLP family.

The sequence is that of MLP-like protein 329 (MLP329) from Arabidopsis thaliana (Mouse-ear cress).